We begin with the raw amino-acid sequence, 380 residues long: Serpin B7 (380 aa).

Ser-217 is modified (phosphoserine).

The protein belongs to the serpin family. Ov-serpin subfamily.

It is found in the cytoplasm. Its function is as follows. Might function as an inhibitor of Lys-specific proteases. Might influence the maturation of megakaryocytes via its action as a serpin. The protein is Serpin B7 (Serpinb7) of Mus musculus (Mouse).